Here is a 676-residue protein sequence, read N- to C-terminus: MGGLSLLQLPRDKFRKSSFFVWVIILFQKAFSMPLGVVTNSTLEVTEIDQLVCKDHLASTDQLKSVGLNLEGSGVSTDIPSATKRWGFRSGVPPKVVSYEAGEWAENCYNLEIKKPDGSECLPPPPDGVRGFPRCRYVHKAQGTGPCPGDYAFHKDGAFFLYDRLASTVIYRGVNFAEGVIAFLILAKPKETFLQSPPIREAVNYTENTSSYYATSYLEYEIENFGAQHSTTLFKIDNNTFVRLDRPHTPQFLFQLNDTIHLHQQLSNTTGRLIWTLDANINADIGEWAFWENKKNLSEQLRGEELSFEALSLNETEDDDAASSRITKGRISDRATRKYSDLVPKNSPGMVPLHIPEGETTLPSQNSTEGRRVGVNTQETITETAATIIGTNGNHMQISTIGIRPSSSQIPSSSPTTAPSPEAQTPTTHTSGPSVMATEEPTTPPGSSPGPTTEAPTLTTPENITTAVKTVLPQESTSNGLITSTVTGILGSLGLRKRSRRQTNTKATGKCNPNLHYWTAQEQHNAAGIAWIPYFGPGAEGIYTEGLMHNQNALVCGLRQLANETTQALQLFLRATTELRTYTILNRKAIDFLLRRWGGTCRILGPDCCIEPHDWTKNITDKINQIIHDFIDNPLPNQDNDDNWWTGWRQWIPAGIGITGIIIAIIALLCVCKLLC.

A signal peptide spans 1–32 (MGGLSLLQLPRDKFRKSSFFVWVIILFQKAFS). Residues 33–185 (MPLGVVTNST…FAEGVIAFLI (153 aa)) are receptor binding. The Extracellular segment spans residues 33-650 (MPLGVVTNST…DDNWWTGWRQ (618 aa)). An N-linked (GlcNAc...) asparagine; by host glycan is attached at asparagine 40. 5 disulfide bridges follow: cysteine 53-cysteine 609, cysteine 108-cysteine 135, cysteine 121-cysteine 147, cysteine 511-cysteine 556, and cysteine 601-cysteine 608. Residues asparagine 204, asparagine 208, asparagine 238, asparagine 257, asparagine 268, asparagine 296, asparagine 314, and asparagine 366 are each glycosylated (N-linked (GlcNAc...) asparagine; by host). A mucin-like region region spans residues 305–485 (ELSFEALSLN…STSNGLITST (181 aa)). Disordered regions lie at residues 337 to 373 (RKYSDLVPKNSPGMVPLHIPEGETTLPSQNSTEGRRV) and 404 to 461 (RPSS…LTTP). Composition is skewed to low complexity over residues 405–428 (PSSSQIPSSSPTTAPSPEAQTPTT) and 449–461 (PGPTTEAPTLTTP). Asparagine 463 carries N-linked (GlcNAc...) asparagine; by host glycosylation. The fusion peptide stretch occupies residues 524-539 (HNAAGIAWIPYFGPGA). A coiled-coil region spans residues 554 to 595 (LVCGLRQLANETTQALQLFLRATTELRTYTILNRKAIDFLLR). Asparagine 563 carries N-linked (GlcNAc...) asparagine; by host glycosylation. Residues 615 to 634 (WTKNITDKINQIIHDFIDNP) are a coiled coil. Asparagine 618 carries an N-linked (GlcNAc...) asparagine; by host glycan. Residues 651 to 671 (WIPAGIGITGIIIAIIALLCV) form a helical membrane-spanning segment. Residues cysteine 670 and cysteine 672 are each lipidated (S-palmitoyl cysteine; by host). Residues 672-676 (CKLLC) are Cytoplasmic-facing.

The protein belongs to the filoviruses glycoprotein family. As to quaternary structure, homotrimer; each monomer consists of a GP1 and a GP2 subunit linked by disulfide bonds. The resulting peplomers (GP1,2) protrude from the virus surface as spikes. Interacts with host integrin alpha-V/ITGAV. Interacts with host CLEC10A. Binds also to host CD209 and CLEC4M/DC-SIGN(R). Interacts with host FOLR1. Interacts with BST2; this interaction inhibits the antiviral effect of BST2 and this allows viral release from infected cells. Interacts with host FCN1; this interaction enhances viral entry. Interacts with host TLR4; this interaction induces cell death in T-lymphocytes or proinflammatory cytokines and SOCS1 production in monocytes. In terms of assembly, interacts with host entry receptor NPC1. GP1 and GP2delta are part of GP1,2delta soluble complexes released by ectodomain shedding. In terms of processing, N-glycosylated. O-glycosylated in the mucin-like region. Post-translationally, palmitoylation of GP2 is not required for its function. In terms of processing, specific enzymatic cleavages in vivo yield mature proteins. The precursor is processed into GP1 and GP2 by host cell furin in the trans Golgi, and maybe by other host proteases, to yield the mature GP1 and GP2 proteins. The cleavage site corresponds to the furin optimal cleavage sequence [KR]-X-[KR]-R. This cleavage does not seem to be required for function. After the internalization of the virus into cell endosomes, GP1 C-terminus is removed by the endosomal proteases cathepsin B, cathepsin L, or both, leaving a 19-kDa N-terminal fragment which is further digested by cathepsin B. Proteolytic processing of GP1,2 by host ADAM17 can remove the transmembrane anchor of GP2 and leads to shedding of complexes consisting in GP1 and truncated GP2 (GP1,2delta).

It is found in the virion membrane. It localises to the host cell membrane. Its subcellular location is the secreted. In terms of biological role, trimeric GP1,2 complexes form the virion surface spikes and mediate the viral entry processes, with GP1 acting as the receptor-binding subunit and GP2 as the membrane fusion subunit. At later times of infection, down-regulates the expression of various host cell surface molecules that are essential for immune surveillance and cell adhesion. Down-modulates several integrins including ITGA1, ITGA2, ITGA3, ITGA4, ITGA5, ITGA6, ITGAV and ITGB1. This decrease in cell adhesion molecules may lead to cell detachment, contributing to the disruption of blood vessel integrity and hemorrhages developed during infection (cytotoxicity). Interacts with host TLR4 and thereby stimulates the differentiation and activation of monocytes leading to bystander death of T-lymphocytes. Down-regulates as well the function of host natural killer cells. Counteracts the antiviral effect of host BST2/tetherin that restricts release of progeny virions from infected cells. However, cooperates with VP40 and host BST2 to activate canonical NF-kappa-B pathway in a manner dependent on neddylation. Functionally, functions as a decoy for anti-GP1,2 antibodies thereby contributing to viral immune evasion. Interacts and activates host macrophages and dendritic cells inducing up-regulation of cytokine transcription. This effect is mediated throught activation of host TLR4. Responsible for binding to the receptor(s) on target cells. Interacts with CD209/DC-SIGN and CLEC4M/DC-SIGNR which act as cofactors for virus entry into dendritic cells (DCs) and endothelial cells. Binding to the macrophage specific lectin CLEC10A also seems to enhance virus infectivity. Interaction with FOLR1/folate receptor alpha may be a cofactor for virus entry in some cell types, although results are contradictory. Members of the Tyro3 receptor tyrosine kinase family also seem to be cell entry factors in filovirus infection. Once attached, the virions are internalized through clathrin-dependent endocytosis and/or macropinocytosis. After internalization of the virus into the endosomes of the host cell, proteolysis of GP1 by two cysteine proteases, CTSB/cathepsin B and CTSL/cathepsin L removes the glycan cap and allows GP1 binding to the host entry receptor NPC1. NPC1-binding, Ca(2+) and acidic pH induce a conformational change of GP2, which unmasks its fusion peptide and permit membranes fusion. Its function is as follows. Acts as a class I viral fusion protein. Under the current model, the protein has at least 3 conformational states: pre-fusion native state, pre-hairpin intermediate state, and post-fusion hairpin state. During viral and target cell membrane fusion, the coiled coil regions (heptad repeats) assume a trimer-of-hairpins structure, positioning the fusion peptide in close proximity to the C-terminal region of the ectodomain. The formation of this structure appears to drive apposition and subsequent fusion of viral and target cell membranes. Responsible for penetration of the virus into the cell cytoplasm by mediating the fusion of the membrane of the endocytosed virus particle with the endosomal membrane. Low pH in endosomes induces an irreversible conformational change in GP2, releasing the fusion hydrophobic peptide. The sequence is that of Envelope glycoprotein (GP) from Sudan ebolavirus (strain Human/Uganda/Gulu/2000) (SEBOV).